The following is a 295-amino-acid chain: tRNA(Ile)-lysidine synthase (295 aa).

10–15 contributes to the ATP binding site; the sequence is SGGPDS.

Belongs to the tRNA(Ile)-lysidine synthase family.

The protein localises to the cytoplasm. It catalyses the reaction cytidine(34) in tRNA(Ile2) + L-lysine + ATP = lysidine(34) in tRNA(Ile2) + AMP + diphosphate + H(+). In terms of biological role, ligates lysine onto the cytidine present at position 34 of the AUA codon-specific tRNA(Ile) that contains the anticodon CAU, in an ATP-dependent manner. Cytidine is converted to lysidine, thus changing the amino acid specificity of the tRNA from methionine to isoleucine. This chain is tRNA(Ile)-lysidine synthase, found in Malacoplasma penetrans (strain HF-2) (Mycoplasma penetrans).